We begin with the raw amino-acid sequence, 756 residues long: Anaphase-promoting complex subunit 5 (756 aa).

TPR repeat units follow at residues 301–334, 522–555, 581–614, and 678–711; these read RYAALNLAALHCRFGHYQQAELALQEAIRIAQES, DGRYHIADSLVAGITALNSIEGMYRKAIVLKAQN, ISVLLSVAELYWRSSCHTIALPVLLQALAFSREY, and YSQQKKAEALESAILNLNEAKTYLAKVDCKEQLR.

This sequence belongs to the APC5 family. As to quaternary structure, the APC/C is composed of at least 12 subunits.

The protein resides in the nucleus. It is found in the cytoplasm. It localises to the cytoskeleton. Its subcellular location is the spindle. It functions in the pathway protein modification; protein ubiquitination. In terms of biological role, component of the anaphase promoting complex/cyclosome (APC/C), a cell cycle-regulated E3 ubiquitin ligase that controls progression through mitosis and the G1 phase of the cell cycle. The APC/C complex acts by mediating ubiquitination and subsequent degradation of target proteins: it mainly mediates the formation of 'Lys-11'-linked polyubiquitin chains and, to a lower extent, the formation of 'Lys-48'- and 'Lys-63'-linked polyubiquitin chains. The APC/C complex catalyzes assembly of branched 'Lys-11'-/'Lys-48'-linked branched ubiquitin chains on target proteins. The protein is Anaphase-promoting complex subunit 5 (ANAPC5) of Gallus gallus (Chicken).